Here is a 155-residue protein sequence, read N- to C-terminus: Small ribosomal subunit protein uS7cz/uS7cy (155 aa).

It belongs to the universal ribosomal protein uS7 family. Part of the 30S ribosomal subunit.

The protein resides in the plastid. Its subcellular location is the chloroplast. In terms of biological role, one of the primary rRNA binding proteins, it binds directly to 16S rRNA where it nucleates assembly of the head domain of the 30S subunit. The sequence is that of Small ribosomal subunit protein uS7cz/uS7cy (rps7-A) from Acorus calamus var. americanus (American sweet flag).